The sequence spans 204 residues: Dof zinc finger protein DOF3.1 (204 aa).

The segment at 1-25 (MQDPAAYYQTMMAKQQQQQQPQFAE) is disordered. The Dof-type zinc-finger motif lies at 29–83 (LKCPRCDSPNTKFCYYNNYNLSQPRHFCKSCRRYWTKGGALRNVPVGGGSRKNAT). Residues cysteine 31, cysteine 34, cysteine 56, and cysteine 59 each coordinate Zn(2+). Disordered stretches follow at residues 70 to 128 (RNVP…TRML) and 182 to 204 (RTEP…AEKN). Over residues 84 to 102 (KRSTSSSSSASSPSNSSQN) the composition is skewed to low complexity. Over residues 106–124 (KNPDPDPDPRNSQKPDLDP) the composition is skewed to basic and acidic residues.

The protein resides in the nucleus. Its function is as follows. Transcription factor that binds specifically to a 5'-AA[AG]G-3' consensus core sequence. The chain is Dof zinc finger protein DOF3.1 (DOF3.1) from Arabidopsis thaliana (Mouse-ear cress).